The chain runs to 202 residues: Prephenate decarboxylase (202 aa).

This sequence belongs to the prephenate decarboxylase family.

The catalysed reaction is prephenate + H(+) = 3-[(4R)-4-hydroxycyclohexa-1,5-dien-1-yl]-2-oxopropanoate + CO2. In terms of biological role, in vivo, involved in the biosynthesis of 2-carboxy-6-hydroxyoctahydroindole (Choi) present in the nonribosomal glycopeptides aeruginoside 126A and B. AerD is an unusual prephenate decarboxylase that avoids the typical aromatization of the cyclohexadienol ring of prephenate. AerD catalyzes the protonation at C8 followed by decarboxylation to produce the dihydro-4-hydroxyphenylpyruvate regioisomer A258 (H2HPP A258)(3-(4-hydroxycyclohexa- 1,5-dienyl)-2-oxopropanoic acid), which is able to undergo a nonenzymatic isomerization to produce dihydro-4-hydroxyphenylpyruvate regioisomer A295 (H2HPP A295)(3-(4-hydroxycyclohex-2-enylidene)-2-oxopropanoic acid). In Planktothrix agardhii (strain NIVA-CYA 126/8), this protein is Prephenate decarboxylase.